A 495-amino-acid chain; its full sequence is Probable leucine aminopeptidase 2 (495 aa).

Residues 1 to 21 (MKSQLLSLAVAVTTISQGVVG) form the signal peptide. The PA domain maps to 130-216 (MAELVVAKNN…SQEDGKNLAT (87 aa)). Asn142 and Asn235 each carry an N-linked (GlcNAc...) asparagine glycan. Residues His259 and Asp271 each contribute to the Zn(2+) site. Residue Asn272 is glycosylated (N-linked (GlcNAc...) asparagine). Glu303 acts as the Proton acceptor in catalysis. Positions 304 and 332 each coordinate Zn(2+). Residue Asn352 is glycosylated (N-linked (GlcNAc...) asparagine). His430 is a binding site for Zn(2+).

Belongs to the peptidase M28 family. M28A subfamily. As to quaternary structure, monomer. Zn(2+) is required as a cofactor.

It localises to the secreted. In terms of biological role, extracellular aminopeptidase that releases a wide variety of amino acids from natural peptides and contributes to pathogenicity. The chain is Probable leucine aminopeptidase 2 (LAP2) from Trichophyton verrucosum (strain HKI 0517).